We begin with the raw amino-acid sequence, 442 residues long: MREIVHLQTGQCGNQIGASFWSTISGEHGLDSTGVYQGTSDLQLERMNVYFNEASGGKYVPRSILIDLEPGTMDAVRSGPFGNLFRPDNFVFGQSGAGNNWAKGHYTEGAELVDSVLDVVRREAEACDCLQGFQITHSLGGGTGAGMGTLLISKIREEYPDRMMATFSVVPSPKVSDTVVEPYNATLSVHQLVENSDETFCIDNEALYDICMRTLKLPDPGYGDLNHLVSAVMSGITTCLRFPGQLNSDLRKLAVNMVPFPRLHFFIVGFAPLTSKGSHSFRSLTVPELTQQMFDAKNMMAASDPRHGRYLTVAAIFRGRVSMKEVEDQMHSVQQKNSSYFVEWIPNNVQTALCSIPPRGLKMSSTFIGNSTSIQELFKRVGDQFSAMFRRKAFLHWYTGEGMDEMEFTEAESNMNDLVSEYQQYEIAGVDEEVELDDEIET.

The GTP site is built by Gln-11, Glu-69, Ser-138, Gly-142, Thr-143, Gly-144, Asn-204, and Asn-226. Glu-69 contributes to the Mg(2+) binding site.

This sequence belongs to the tubulin family. In terms of assembly, dimer of alpha and beta chains. A typical microtubule is a hollow water-filled tube with an outer diameter of 25 nm and an inner diameter of 15 nM. Alpha-beta heterodimers associate head-to-tail to form protofilaments running lengthwise along the microtubule wall with the beta-tubulin subunit facing the microtubule plus end conferring a structural polarity. Microtubules usually have 13 protofilaments but different protofilament numbers can be found in some organisms and specialized cells. The cofactor is Mg(2+).

Its subcellular location is the cytoplasm. The protein resides in the cytoskeleton. Its function is as follows. Tubulin is the major constituent of microtubules, a cylinder consisting of laterally associated linear protofilaments composed of alpha- and beta-tubulin heterodimers. Microtubules grow by the addition of GTP-tubulin dimers to the microtubule end, where a stabilizing cap forms. Below the cap, tubulin dimers are in GDP-bound state, owing to GTPase activity of alpha-tubulin. This chain is Tubulin beta chain (TUB-B), found in Pneumocystis carinii.